A 220-amino-acid chain; its full sequence is Deoxyribose-phosphate aldolase (220 aa).

Asp89 functions as the Proton donor/acceptor in the catalytic mechanism. The Schiff-base intermediate with acetaldehyde role is filled by Lys151. Residue Lys180 is the Proton donor/acceptor of the active site.

This sequence belongs to the DeoC/FbaB aldolase family. DeoC type 1 subfamily.

The protein localises to the cytoplasm. It carries out the reaction 2-deoxy-D-ribose 5-phosphate = D-glyceraldehyde 3-phosphate + acetaldehyde. It participates in carbohydrate degradation; 2-deoxy-D-ribose 1-phosphate degradation; D-glyceraldehyde 3-phosphate and acetaldehyde from 2-deoxy-alpha-D-ribose 1-phosphate: step 2/2. Its function is as follows. Catalyzes a reversible aldol reaction between acetaldehyde and D-glyceraldehyde 3-phosphate to generate 2-deoxy-D-ribose 5-phosphate. This chain is Deoxyribose-phosphate aldolase, found in Streptococcus uberis (strain ATCC BAA-854 / 0140J).